Reading from the N-terminus, the 209-residue chain is Large ribosomal subunit protein bL25 (209 aa).

A disordered region spans residues 190–209 (PDASAAPVAAPAAPAKKGKK).

Belongs to the bacterial ribosomal protein bL25 family. CTC subfamily. In terms of assembly, part of the 50S ribosomal subunit; part of the 5S rRNA/L5/L18/L25 subcomplex. Contacts the 5S rRNA. Binds to the 5S rRNA independently of L5 and L18.

Its function is as follows. This is one of the proteins that binds to the 5S RNA in the ribosome where it forms part of the central protuberance. The protein is Large ribosomal subunit protein bL25 of Delftia acidovorans (strain DSM 14801 / SPH-1).